The following is a 192-amino-acid chain: Glycerol-3-phosphate acyltransferase (192 aa).

The next 5 helical transmembrane spans lie at 1 to 21 (MFIAILMGAYLLGSIPFAYIL), 49 to 69 (GLAGLVLLLDIAKSAVLIYSL), 80 to 100 (ELCIVGLLSVLGHIYPIWLKF), 110 to 130 (IGVIIPLNPLMLCVFFISWLF), and 143 to 163 (IVSIIATMIVCYLTESGVVAL).

The protein belongs to the PlsY family. Probably interacts with PlsX.

It is found in the cell inner membrane. The enzyme catalyses an acyl phosphate + sn-glycerol 3-phosphate = a 1-acyl-sn-glycero-3-phosphate + phosphate. It participates in lipid metabolism; phospholipid metabolism. In terms of biological role, catalyzes the transfer of an acyl group from acyl-phosphate (acyl-PO(4)) to glycerol-3-phosphate (G3P) to form lysophosphatidic acid (LPA). This enzyme utilizes acyl-phosphate as fatty acyl donor, but not acyl-CoA or acyl-ACP. The chain is Glycerol-3-phosphate acyltransferase from Anaplasma phagocytophilum (strain HZ).